A 257-amino-acid polypeptide reads, in one-letter code: Ras-related protein Rab-26 (257 aa).

The tract at residues 1-53 (MSRKKTPKSKGGSVPAASTLPAAANGPRLAHPRTARPGPEAPPNGPPQSGRPS) is disordered. Residues S73, G74, V75, G76, K77, T78, C79, S96, and T97 each contribute to the GTP site. Mg(2+) is bound at residue T78. Short sequence motifs (switch) lie at residues 87 to 102 (GAFL…GIDF) and 120 to 137 (DTAG…YYRD). Residues T97 and D120 each coordinate Mg(2+). 6 residues coordinate GTP: G123, N178, K179, D181, A209, and K210. Residues C254 and C255 are each lipidated (S-geranylgeranyl cysteine).

This sequence belongs to the small GTPase superfamily. Rab family. Interacts with ADRA2B. Interacts with RIMS1. It depends on Mg(2+) as a cofactor. As to expression, expressed in pancreas, kidney, brain, submandibular gland, and lung.

It is found in the cytoplasmic vesicle. Its subcellular location is the secretory vesicle membrane. The protein resides in the golgi apparatus membrane. The catalysed reaction is GTP + H2O = GDP + phosphate + H(+). With respect to regulation, regulated by guanine nucleotide exchange factors (GEFs) which promote the exchange of bound GDP for free GTP. Regulated by GTPase activating proteins (GAPs) which increase the GTP hydrolysis activity. Inhibited by GDP dissociation inhibitors (GDIs). Functionally, the small GTPases Rab are key regulators of intracellular membrane trafficking, from the formation of transport vesicles to their fusion with membranes. Rabs cycle between an inactive GDP-bound form and an active GTP-bound form that is able to recruit to membranes different set of downstream effectors directly responsible for vesicle formation, movement, tethering and fusion. RAB26 mediates transport of ADRA2A and ADRA2B from the Golgi to the cell membrane. Plays a role in the maturation of zymogenic granules and in pepsinogen secretion in the stomach. Plays a role in the secretion of amylase from acinar granules in the parotid gland. In Rattus norvegicus (Rat), this protein is Ras-related protein Rab-26.